The sequence spans 602 residues: Multiple epidermal growth factor-like domains protein 9 (602 aa).

Positions 1–30 (MNGGAERAMRSLPSLGGLALLCCAAAAAAA) are cleaved as a signal peptide. Residues 31–514 (AVASAASAGN…LADVSWTQFN (484 aa)) are Extracellular-facing. The disordered stretch occupies residues 38–199 (AGNVTGGGGA…PATEAPSSPP (162 aa)). N-linked (GlcNAc...) asparagine glycosylation is present at N40. Low complexity-rich tracts occupy residues 68-85 (PRAT…PPRA) and 139-166 (APTR…TVPA). A compositionally biased stretch (pro residues) spans 167-176 (PTTPRTPTPD). N-linked (GlcNAc...) asparagine glycosylation is present at N182. Over residues 187-199 (PTPPATEAPSSPP) the composition is skewed to pro residues. 20 disulfides stabilise this stretch: C204–C217, C206–C224, C226–C235, C238–C251, C254–C266, C256–C272, C274–C283, C286–C298, C301–C310, C303–C317, C320–C329, C332–C346, C349–C360, C351–C371, C374–C383, C386–C397, C400–C415, C402–C422, C425–C434, and C437–C449. Laminin EGF-like domains follow at residues 204-253 (CNCS…LCQP), 254-300 (CDCS…GCLP), 301-348 (CQCN…ECLR), 349-399 (CPCS…ICRK), and 400-451 (CQCH…NCIK). 2 N-linked (GlcNAc...) asparagine glycosylation sites follow: N205 and N218. A glycan (N-linked (GlcNAc...) asparagine) is linked at N245. Residue N267 is glycosylated (N-linked (GlcNAc...) asparagine). N-linked (GlcNAc...) asparagine glycosylation is present at N305. N428 carries N-linked (GlcNAc...) asparagine glycosylation. N468, N481, and N500 each carry an N-linked (GlcNAc...) asparagine glycan. The chain crosses the membrane as a helical span at residues 515 to 535 (IIILTVIIIVVVLLMGFVGAV). At 536–602 (YMYREYQNRK…LTTPIHNYKA (67 aa)) the chain is on the cytoplasmic side.

Its subcellular location is the membrane. The sequence is that of Multiple epidermal growth factor-like domains protein 9 (MEGF9) from Homo sapiens (Human).